A 105-amino-acid polypeptide reads, in one-letter code: Heat shock protein HspQ (105 aa).

The disordered stretch occupies residues methionine 77–asparagine 105.

Belongs to the HspQ family.

It localises to the cytoplasm. Functionally, involved in the degradation of certain denaturated proteins, including DnaA, during heat shock stress. This is Heat shock protein HspQ from Salmonella arizonae (strain ATCC BAA-731 / CDC346-86 / RSK2980).